We begin with the raw amino-acid sequence, 386 residues long: DNA dC-&gt;dU-editing enzyme APOBEC-3D (386 aa).

2 CMP/dCMP-type deaminase domains span residues 29 to 145 (GRSY…DWRW) and 187 to 334 (DDNY…LCSL). Positions 78, 109, 112, and 262 each coordinate Zn(2+). The active-site Proton donor is the Glu-264. Residues Cys-293 and Cys-296 each contribute to the Zn(2+) site.

It belongs to the cytidine and deoxycytidylate deaminase family. Can form homo- and heterodimers with APOBEC3F and APOBEC3G. Interacts with L1RE1; this interaction inhibits LINE-1 retrotransposition. In terms of assembly, (Microbial infection) Interacts with HIV-1 Vif. This interaction triggers APOBEC3D polyubiquitylation and degradation by the 26S proteasome. The cofactor is Zn(2+). Expressed in lymphoid organs. Also detected in non-lymphoid tissues including lung.

Its subcellular location is the cytoplasm. It localises to the P-body. The catalysed reaction is a 2'-deoxycytidine in single-stranded DNA + H2O + H(+) = a 2'-deoxyuridine in single-stranded DNA + NH4(+). Its activity is regulated as follows. (Microbial infection) Antiviral activity is neutralized by the HIV-1 virion infectivity factor (Vif), that prevents its incorporation into progeny virions by both inhibiting its translation and/or by inducing its ubiquitination and subsequent degradation by the 26S proteasome. In terms of biological role, DNA deaminase (cytidine deaminase) which acts as an inhibitor of retrovirus replication and retrotransposon mobility via deaminase-dependent and -independent mechanisms. Exhibits antiviral activity against HIV-1. After the penetration of retroviral nucleocapsids into target cells of infection and the initiation of reverse transcription, it can induce the conversion of cytosine to uracil in the minus-sense single-strand viral DNA, leading to G-to-A hypermutations in the subsequent plus-strand viral DNA. The resultant detrimental levels of mutations in the proviral genome, along with a deamination-independent mechanism that works prior to the proviral integration, together exert efficient antiretroviral effects in infected target cells. Selectively targets single-stranded DNA and does not deaminate double-stranded DNA or single- or double-stranded RNA. Also inhibits the mobility of LTR and non-LTR retrotransposons. (Microbial infection) Enhances hepatitis B virus/HBV replication by excluding restriction factors APOBEC3F and APOBEC3G from HBV capsids. This Homo sapiens (Human) protein is DNA dC-&gt;dU-editing enzyme APOBEC-3D.